The following is a 911-amino-acid chain: MEVNCLTLKDLISRPPRLDFAIEDGENAQKENIFVDLSRMAPKTPIKNEPIDLSKQKIFTPERNPITPVKLVDRQQVEPWTPTANLKILISAASPDIRDREKKKELFRPIENKDDVFTDSLQLDAVDDSAVDEFEKQRPSRKQKSLGLLCQKFLARYPSYPLSTEKTTISLDEVAVSLGVERRRIYDIVNVLESLHLVSRVAKNQYSWHGRHSLPKTLRNLQRLGEKQKYEEQMAHLQQKELNPIDHKSGERRRDGCPDSQDPQLLDFPEPDCPSSSANSRKDKSLKIMSQKFVMLFLVSKTKIVTLDVAAKILIEESQDIPDHSKFKTKVRRLYDIANVLTSLMLIKKVHVTEDRGRKPAFKWIGPVDFSSTDDDLVDVSTPVLPELKKEIYGHVQFCAKQKLARHSSFNSEQASERTQRKVNSEPSSPYRQKQGLGVYSLEIGSLAAVSRQKMEDNSETVAFASQNMMPLPSSLDPAAPLPSPSVDSEYRVSPLCHQALSAAQTDLKALPAQNGLNGQGGVSLASMALDVEHQPQPLAAAQPLLYVPPAPLFMLCGGLQEGLSPGSGSGSGSVGGGSEVTAAEQPPMPSGQKRLSKERRLQEEEEEPATKRQCRDHEDGPLSLVMPKKPSDSADIASPKTSENRASAPHEDTHMNGQLSAAKAVSGKATTNGFVSSEWGNPCSNTEIEKPSEENESTKGPSPLQYLYVQPPAGLNGLSVLLPSSQSPHAVGLPVGPLPSLSIQYMVLPSPALSGFPVLCSPTMPGPVSSAPSPLPNVGPVNFGLPGLGSTAHLLIGPAAMVNPKSSTLPSTDPQLQGPCSLHLSPVMSRSHGSVQPGSPAYGSLPAATVKLQQSPVPVTPKSIRCTHQETFFKTPGSLGDPVLRRKERNQSRSSSSAQRRLEISSGGTD.

The residue at position 94 (S94) is a Phosphoserine. A DNA-binding region spans residues 141–210; sequence RKQKSLGLLC…VAKNQYSWHG (70 aa). 3 disordered regions span residues 239–281, 409–433, and 565–706; these read QKEL…ANSR, SFNS…PYRQ, and SPGS…SPLQ. Positions 243-257 are enriched in basic and acidic residues; it reads NPIDHKSGERRRDGC. The DNA-binding element occupies 281 to 366; that stretch reads RKDKSLKIMS…GRKPAFKWIG (86 aa). S409 is subject to Phosphoserine. The span at 415–424 shows a compositional bias: basic and acidic residues; that stretch reads ASERTQRKVN. Gly residues predominate over residues 566–579; it reads PGSGSGSGSVGGGS. Basic and acidic residues predominate over residues 599–621; that stretch reads ERRLQEEEEEPATKRQCRDHEDG. Positions 669 to 687 are enriched in polar residues; sequence KATTNGFVSSEWGNPCSNT. Positions 688-698 are enriched in basic and acidic residues; it reads EIEKPSEENES. Position 840 is a phosphoserine (S840). Residues 873 to 911 form a disordered region; it reads FFKTPGSLGDPVLRRKERNQSRSSSSAQRRLEISSGGTD.

Belongs to the E2F/DP family. Homodimer and heterodimer: mainly forms homodimers and, to a lesser extent, heterodimers with E2F8. Dimerization is important for DNA-binding. Interacts with HIF1A. Interacts with MN1.

It is found in the nucleus. Atypical E2F transcription factor that participates in various processes such as angiogenesis, polyploidization of specialized cells and DNA damage response. Mainly acts as a transcription repressor that binds DNA independently of DP proteins and specifically recognizes the E2 recognition site 5'-TTTC[CG]CGC-3'. Directly represses transcription of classical E2F transcription factors such as E2F1. Acts as a regulator of S-phase by recognizing and binding the E2-related site 5'-TTCCCGCC-3' and mediating repression of G1/S-regulated genes. Plays a key role in polyploidization of cells in placenta and liver by regulating the endocycle, probably by repressing genes promoting cytokinesis and antagonizing action of classical E2F proteins (E2F1, E2F2 and/or E2F3). Required for placental development by promoting polyploidization of trophoblast giant cells. Also involved in DNA damage response: up-regulated by p53/TP53 following genotoxic stress and acts as a downstream effector of p53/TP53-dependent repression by mediating repression of indirect p53/TP53 target genes involved in DNA replication. Acts as a promoter of sprouting angiogenesis, possibly by acting as a transcription activator: associates with HIF1A, recognizes and binds the VEGFA promoter, which is different from canonical E2 recognition site, and activates expression of the VEGFA gene. Acts as a negative regulator of keratinocyte differentiation. The sequence is that of Transcription factor E2F7 (E2F7) from Bos taurus (Bovine).